We begin with the raw amino-acid sequence, 116 residues long: Large ribosomal subunit protein bL20 (116 aa).

This sequence belongs to the bacterial ribosomal protein bL20 family.

Its function is as follows. Binds directly to 23S ribosomal RNA and is necessary for the in vitro assembly process of the 50S ribosomal subunit. It is not involved in the protein synthesizing functions of that subunit. The protein is Large ribosomal subunit protein bL20 (rplT) of Helicobacter pylori (strain ATCC 700392 / 26695) (Campylobacter pylori).